The primary structure comprises 257 residues: 1-(5-phosphoribosyl)-5-[(5-phosphoribosylamino)methylideneamino] imidazole-4-carboxamide isomerase (257 aa).

The active-site Proton acceptor is the Asp8. Residue Asp129 is the Proton donor of the active site.

It belongs to the HisA/HisF family.

It is found in the cytoplasm. It carries out the reaction 1-(5-phospho-beta-D-ribosyl)-5-[(5-phospho-beta-D-ribosylamino)methylideneamino]imidazole-4-carboxamide = 5-[(5-phospho-1-deoxy-D-ribulos-1-ylimino)methylamino]-1-(5-phospho-beta-D-ribosyl)imidazole-4-carboxamide. The protein operates within amino-acid biosynthesis; L-histidine biosynthesis; L-histidine from 5-phospho-alpha-D-ribose 1-diphosphate: step 4/9. This Crocosphaera subtropica (strain ATCC 51142 / BH68) (Cyanothece sp. (strain ATCC 51142)) protein is 1-(5-phosphoribosyl)-5-[(5-phosphoribosylamino)methylideneamino] imidazole-4-carboxamide isomerase.